The chain runs to 179 residues: MARLKEIYRKEIAPKLKEELKLSNVMEVPRVTKITLNMGLGEAIGDKKVIEHAVADLEKITGQKVVVTYARKSIAGFKVREGWPIGVKVTLRRDRMYEFLDRLLSISLPRVRDFRGLNAKSFDGRGNYSMGVKEQIIFPEIDYDKIDALRGLDITLTTTAKNDDEGRALLRAFKFPFRN.

Belongs to the universal ribosomal protein uL5 family. Part of the 50S ribosomal subunit; part of the 5S rRNA/L5/L18/L25 subcomplex. Contacts the 5S rRNA and the P site tRNA. Forms a bridge to the 30S subunit in the 70S ribosome.

Functionally, this is one of the proteins that bind and probably mediate the attachment of the 5S RNA into the large ribosomal subunit, where it forms part of the central protuberance. In the 70S ribosome it contacts protein S13 of the 30S subunit (bridge B1b), connecting the 2 subunits; this bridge is implicated in subunit movement. Contacts the P site tRNA; the 5S rRNA and some of its associated proteins might help stabilize positioning of ribosome-bound tRNAs. This Pseudomonas savastanoi pv. phaseolicola (strain 1448A / Race 6) (Pseudomonas syringae pv. phaseolicola (strain 1448A / Race 6)) protein is Large ribosomal subunit protein uL5.